The sequence spans 201 residues: MKWCRLSIILMSLILLAGCMPLRQPSPSADPQQTWQERQFALQEIEDWNLSGRLAINAIKEAWTGTLRWTQRGDEFKILWLFPLGQGSVELYGNPDRVTLRAPKEEPMIATSAEELLGTRLGWSLPVSGLRYWLLGLPAPGLPVVKSSLDSFGRLLRLSQGGWQIRYLDYKWIENFALPGKIFLEHPKLRLRLVIDHWQLG.

The signal sequence occupies residues 1-18 (MKWCRLSIILMSLILLAG). C19 carries N-palmitoyl cysteine lipidation. A lipid anchor (S-diacylglycerol cysteine) is attached at C19.

It belongs to the LolB family. Monomer.

The protein resides in the cell outer membrane. In terms of biological role, plays a critical role in the incorporation of lipoproteins in the outer membrane after they are released by the LolA protein. This chain is Outer-membrane lipoprotein LolB, found in Nitrosococcus oceani (strain ATCC 19707 / BCRC 17464 / JCM 30415 / NCIMB 11848 / C-107).